The sequence spans 57 residues: Large ribosomal subunit protein bL32A (57 aa).

The protein belongs to the bacterial ribosomal protein bL32 family.

This Streptomyces coelicolor (strain ATCC BAA-471 / A3(2) / M145) protein is Large ribosomal subunit protein bL32A (rpmF1).